A 1480-amino-acid polypeptide reads, in one-letter code: MGPIRPALAPWPRHLLRCVLLLGGLRLGHPADSAAALLEPDVFLIFSQGMQGCLEAQGVQVRVIPVCNASLPAQRWKWVSRNRLFNLGAMQCLGTGWPATNTTVSLGMYECDREALSLRWQCRTLGDQLSLLLGARANNASKPGTLERGDQTRSGHWNIYGSEEDLCARPYYEVYTIQGNSHGKPCTIPFKYDNQWFHGCTSTGREDGHLWCATTQDYGKDERWGFCPIKSNDCETFWDKDQLTDSCYQFNFQSTLSWREAWASCEQQGADLLSITEIHEQTYINGLLTGYSSTLWIGLNDLDTSGGWQWSDNSPLKYLNWESDQPDNPGEENCGVIRTESSGGWQNHDCSIALPYVCKKKPNATAEPIQPDRWANVKVECDPSWQPFQGHCYRLQAEKRSWQESKRACLRGGGDLLSIHSMTELEFITKQIKQEVEELWIGLNDLKLQMNFEWSDGSLVSFTHWHPFEPNNFRDSLEDCVTIWGPEGRWNDSPCNQSLPSICKKAGRLSQGTAEEDHGCRKGWTWHSPSCYWLGEDQVIYSDARRLCTDHGSQLVTITNRFEQAFVSSLIYNWEGEYFWTALQDLNSTGSFRWLSGDEVMYTHWNRDQPGYRRGGCVALATGSAMGLWEVKNCTSFRARYICRQSLGTPVTPELPGPDPTPSLTGSCPQGWVSDPKLRHCYKVFSSERLQEKKSWIEALGVCRELGAQLLSLASYEEEHFVANMLNKIFGESEPENHEQHWFWIGLNRRDPREGHSWRWSDGLGFSYHNFARSQHDDDNIRGCAVLDLASLQWVAMQCQTQLDWICKIPRGVDVREPDIGRQGRLEWVRFQEAEYKFFEHHSSWAQAQRICTWFQAELTSVHSQAELDFLGQNMQKLSSDQEQHWWIGLHTSESDGRFRWSDGSVINFVSWAPGKPRPIGKDKKCVYMTARQEDWGDQRCHTALPYICKRSNSSGETRPHDLPPSTLGGCPSGWNQFLNKCFRIQGQDPQDRVKWSEAQFSCEQQEAQLVTIANPLEQAYITASLPNVTFDLWIGLHGSQRDFQWIEQEPLLYTNWAPGEPSGPSPAPSGTKPTSCAVILHSPSAHFTGRWDDRSCTEETHGFICQKGTDPSLSPSPAAALPAPGTELSYLNRTFRLLQKPLRWKDALLLCESRNASLAHVPDPYTQAFLTQAARGLQAPLWIGLASEEGSRRYSWLSEEPLNYASWQDGEPQHTGGCAYVDVDGTWRTTSCDTKLQGAVCGVSRGPPPPRISYRGSCPQGLADSSWIPFREHCYSFHTELLLGHKEALQRCQRAGGTVLSILDEMENVFVWEHLQTAETQSRGAWLGMNFNPKGGMLVWQDNTAVNYSNWGPPGLGPSMLSHNSCYWIQSSSGLWRPGACTNVTMGVVCKLPRVEENGFLPSAALPENPVALVVVLTAAVLLLLALLTGALILYRRRQSAERGSFEGARYSRSSRSGPAEATEKNILVSDMEMNEQQE.

A signal peptide spans 1-30; sequence MGPIRPALAPWPRHLLRCVLLLGGLRLGHP. At 31–1413 the chain is on the extracellular side; that stretch reads ADSAAALLEP…SAALPENPVA (1383 aa). In terms of domain architecture, Ricin B-type lectin spans 40 to 166; sequence PDVFLIFSQG…WNIYGSEEDL (127 aa). 2 disulfide bridges follow: C53–C67 and C92–C111. N101 and N139 each carry an N-linked (GlcNAc...) asparagine glycan. Residues 181–229 form the Fibronectin type-II domain; that stretch reads SHGKPCTIPFKYDNQWFHGCTSTGREDGHLWCATTQDYGKDERWGFCPI. 4 cysteine pairs are disulfide-bonded: C186-C212, C200-C227, C265-C358, and C334-C350. The C-type lectin 1 domain maps to 243–359; the sequence is LTDSCYQFNF…CSIALPYVCK (117 aa). The N-linked (GlcNAc...) asparagine glycan is linked to N363. 7 C-type lectin domains span residues 388–504, 527–643, 677–808, 831–950, 978–1106, 1131–1242, and 1271–1391; these read FQGH…SICK, HSPS…RYIC, KLRH…WICK, FQEA…YICK, FLNK…GFIC, YLNR…GAVC, and FREH…GVVC. Disulfide bonds link C409–C503, C480–C495, C617–C634, C703–C807, C784–C799, C852–C949, and C926–C941. Residue N1028 is glycosylated (N-linked (GlcNAc...) asparagine). Cysteines 1077 and 1097 form a disulfide. Residue K1141 forms a Glycyl lysine isopeptide (Lys-Gly) (interchain with G-Cter in SUMO1) linkage. C1219 and C1233 are disulfide-bonded. Residue N1348 is glycosylated (N-linked (GlcNAc...) asparagine). A disulfide bridge links C1367 with C1382. The chain crosses the membrane as a helical span at residues 1414–1434; sequence LVVVLTAAVLLLLALLTGALI. Topologically, residues 1435–1480 are cytoplasmic; it reads LYRRRQSAERGSFEGARYSRSSRSGPAEATEKNILVSDMEMNEQQE. Residues 1446–1480 are disordered; the sequence is SFEGARYSRSSRSGPAEATEKNILVSDMEMNEQQE.

Interacts directly with PLAUR/UPAR and PLAU/pro-UPA to form a tri-molecular complex. Interacts with collagen V. Interacts with C-terminal region of type I collagen/COL1A1. N-glycosylated. In terms of processing, phosphorylated.

It localises to the cell membrane. May play a role as endocytotic lectin receptor displaying calcium-dependent lectin activity. Internalizes glycosylated ligands from the extracellular space for release in an endosomal compartment via clathrin-mediated endocytosis. May be involved in plasminogen activation system controlling the extracellular level of PLAUR/PLAU, and thus may regulate protease activity at the cell surface. May contribute to cellular uptake, remodeling and degradation of extracellular collagen matrices. May participate in remodeling of extracellular matrix cooperating with the matrix metalloproteinases (MMPs) secreted by hepatic stellate cells. May mediate endocytosis of partially degraded collagens and glycoproteins produced in the extracellular matrix by MMPs. The protein is C-type mannose receptor 2 (Mrc2) of Rattus norvegicus (Rat).